The chain runs to 344 residues: Prickle-like protein 4 (344 aa).

The PET domain occupies 1 to 81 (MSPQGPAVLS…ARLVLPKLEG (81 aa)). LIM zinc-binding domains are found at residues 82 to 147 (HTCE…LLRP) and 148 to 207 (RCPA…RYSD). The tract at residues 253 to 344 (GSSLQTQRGL…NASKTHCTMC (92 aa)) is disordered. A compositionally biased stretch (polar residues) spans 257-271 (QTQRGLPGSSPQQEN). Residues 272 to 296 (RPGDKAEAPKGQEQCRLETIRDPKD) show a composition bias toward basic and acidic residues. Positions 322 to 344 (SWKTPGSLQAEDSNASKTHCTMC) are enriched in polar residues.

Belongs to the prickle / espinas / testin family. In terms of tissue distribution, expressed in a broad range of normal tissues as well as in hepatocellular carcinoma, breast cancer and prostate cancer tissues.

This chain is Prickle-like protein 4 (PRICKLE4), found in Homo sapiens (Human).